The chain runs to 198 residues: Ribosome maturation factor RimM (198 aa).

Positions 1–21 are disordered; sequence MPPPTASTPDDSADPGPDFAD. In terms of domain architecture, PRC barrel spans 122–195; the sequence is DDELFADDLV…RIVVRPIDGL (74 aa).

Belongs to the RimM family. In terms of assembly, binds ribosomal protein uS19.

It localises to the cytoplasm. Its function is as follows. An accessory protein needed during the final step in the assembly of 30S ribosomal subunit, possibly for assembly of the head region. Essential for efficient processing of 16S rRNA. May be needed both before and after RbfA during the maturation of 16S rRNA. It has affinity for free ribosomal 30S subunits but not for 70S ribosomes. The protein is Ribosome maturation factor RimM of Salinibacter ruber (strain DSM 13855 / M31).